The following is a 467-amino-acid chain: ADAM DEC1 (467 aa).

The signal sequence occupies residues 1–33; that stretch reads MLPGTSRLPTEASMSWVLLSVLWLIIQIQVIDA. A propeptide spanning residues 34 to 208 is cleaved from the precursor; the sequence is TLTPELKPHE…LRTSRSLKNP (175 aa). Asn-61 and Asn-236 each carry an N-linked (GlcNAc...) asparagine glycan. The region spanning 217 to 411 is the Peptidase M12B domain; sequence KYIGLFLVLD…RNARCLLLAP (195 aa). Disulfide bonds link Cys-327–Cys-406 and Cys-368–Cys-373. His-351 lines the Zn(2+) pocket. Glu-352 is a catalytic residue. Positions 355 and 361 each coordinate Zn(2+). One can recognise a Disintegrin domain in the interval 418 to 467; the sequence is KPTCGNQVLDVGEECDCGSPEECTNLCCEPLTCRLKSQPDCSEASNHITE.

Zn(2+) is required as a cofactor. In terms of tissue distribution, expressed highly in uterus during pregnancy.

Its subcellular location is the secreted. Functionally, may play an important role in the control of the immune response and during pregnancy. The protein is ADAM DEC1 (Adamdec1) of Mus musculus (Mouse).